The following is a 237-amino-acid chain: Nodulation protein NolA (237 aa).

In terms of domain architecture, HTH merR-type spans 10–79; that stretch reads RWRIGELAEA…LVEIRKAMEG (70 aa). The H-T-H motif DNA-binding region spans 13-32; sequence IGELAEATGVTVRTLHHYEH.

Involved in genotype-specific nodulation of soybeans. This Bradyrhizobium diazoefficiens (strain JCM 10833 / BCRC 13528 / IAM 13628 / NBRC 14792 / USDA 110) protein is Nodulation protein NolA (nolA).